The sequence spans 542 residues: Chaperonin GroEL (542 aa).

ATP-binding positions include 29-32, 86-90, Gly413, and Asp492; these read TLGP and DGTTT.

Belongs to the chaperonin (HSP60) family. In terms of assembly, forms a cylinder of 14 subunits composed of two heptameric rings stacked back-to-back. Interacts with the co-chaperonin GroES.

It localises to the cytoplasm. It carries out the reaction ATP + H2O + a folded polypeptide = ADP + phosphate + an unfolded polypeptide.. Together with its co-chaperonin GroES, plays an essential role in assisting protein folding. The GroEL-GroES system forms a nano-cage that allows encapsulation of the non-native substrate proteins and provides a physical environment optimized to promote and accelerate protein folding. The protein is Chaperonin GroEL of Nocardia asteroides.